Here is a 283-residue protein sequence, read N- to C-terminus: Elongation factor Ts (283 aa).

An involved in Mg(2+) ion dislocation from EF-Tu region spans residues 84–87 (TDFV).

The protein belongs to the EF-Ts family.

Its subcellular location is the cytoplasm. Associates with the EF-Tu.GDP complex and induces the exchange of GDP to GTP. It remains bound to the aminoacyl-tRNA.EF-Tu.GTP complex up to the GTP hydrolysis stage on the ribosome. The polypeptide is Elongation factor Ts (Bifidobacterium longum (strain DJO10A)).